A 102-amino-acid polypeptide reads, in one-letter code: Malonate decarboxylase acyl carrier protein (102 aa).

Position 27 is an O-(phosphoribosyl dephospho-coenzyme A)serine (Ser27).

It belongs to the MdcC family. In terms of processing, covalently binds the prosthetic group of malonate decarboxylase.

It is found in the cytoplasm. Its function is as follows. Subunit of malonate decarboxylase, it is an acyl carrier protein to which acetyl and malonyl thioester residues are bound via a 2'-(5''-phosphoribosyl)-3'-dephospho-CoA prosthetic group and turn over during the catalytic mechanism. The sequence is that of Malonate decarboxylase acyl carrier protein from Acinetobacter calcoaceticus.